The sequence spans 201 residues: Glycerol-3-phosphate acyltransferase (201 aa).

5 helical membrane passes run 10–30, 59–79, 87–107, 116–136, and 161–181; these read ALIL…GIVI, PAAL…VLIA, AAQL…WLGF, FLGT…LTWL, and ILLG…LIFI.

Belongs to the PlsY family. In terms of assembly, probably interacts with PlsX.

It localises to the cell inner membrane. The catalysed reaction is an acyl phosphate + sn-glycerol 3-phosphate = a 1-acyl-sn-glycero-3-phosphate + phosphate. Its pathway is lipid metabolism; phospholipid metabolism. Catalyzes the transfer of an acyl group from acyl-phosphate (acyl-PO(4)) to glycerol-3-phosphate (G3P) to form lysophosphatidic acid (LPA). This enzyme utilizes acyl-phosphate as fatty acyl donor, but not acyl-CoA or acyl-ACP. The sequence is that of Glycerol-3-phosphate acyltransferase from Cereibacter sphaeroides (strain ATCC 17029 / ATH 2.4.9) (Rhodobacter sphaeroides).